The sequence spans 733 residues: Probable Rho-GTPase-activating protein 6 (733 aa).

Polar residues predominate over residues 116 to 125; it reads VFNESKSSSP. The interval 116-135 is disordered; that stretch reads VFNESKSSSPPDAHTDKYFT. T141 carries the post-translational modification Phosphothreonine. Positions 174–256 are disordered; that stretch reads RFDKPSNNGP…SKGSWSSILR (83 aa). A compositionally biased stretch (low complexity) spans 179–195; that stretch reads SNNGPLGRSSLNLSSLS. Polar residues-rich tracts occupy residues 196–218 and 225–240; these read HELQ…SSDT and PPSS…ASQD. Residues 312–546 enclose the Rho-GAP domain; that stretch reads TNLCKFTFPT…GLIIHWPEVL (235 aa). The interval 692–713 is disordered; that stretch reads PVTVTASSETNKKSQKINKKAS. The span at 704 to 713 shows a compositional bias: basic residues; the sequence is KSQKINKKAS.

This chain is Probable Rho-GTPase-activating protein 6 (rga6), found in Schizosaccharomyces pombe (strain 972 / ATCC 24843) (Fission yeast).